Reading from the N-terminus, the 388-residue chain is Paired box protein Pax-5 (388 aa).

Positions 15-141 (RHGGVNQLGG…SSINRIIRTK (127 aa)) form a DNA-binding region, paired. Residues 18 to 74 (GVNQLGGVFVNGRPLPDVVRQRIVELAHQGVRPCDISRQLRVSHGCVSKILGRYYET) are PAI subdomain. Positions 93–141 (KVVDKIADYKRQNPTMFAWEIRDRLLAERVCDNDTVPSVSSINRIIRTK) are RED subdomain. Polar residues predominate over residues 143 to 158 (QQPTNQQIPPSNHSIA). Disordered regions lie at residues 143-162 (QQPT…STGS) and 191-217 (AETN…PGRD).

As to expression, first detected in mid-neurula embryos in the folding neural tube. With the completion of neurulation, expression becomes localized to the midbrain/hindbrain boundary (MHB) till at least stage 40. Expression is absent from regions adjacent to the MHB. In tailbuds, weakly and transiently expressed in the developing otic vesicle from stage 21 to stage 27.

The protein localises to the nucleus. Functionally, probable transcription factor. The polypeptide is Paired box protein Pax-5 (Xenopus laevis (African clawed frog)).